Consider the following 736-residue polypeptide: Myosin-7 (736 aa).

The Myosin motor domain maps to 1–342 (NWMVTRINAT…LLGLLEEMRD (342 aa)). Residues 219 to 241 (LNKLMTNLRSTHPHFVRCIIPNE) are actin-binding. The region spanning 345-374 (LSRIITRIQAQSRGVLSRMEYKKLLERRDS) is the IQ domain. Residues 403 to 736 (LLKSAETEKE…MNKKREAEFQ (334 aa)) are a coiled coil. Residue S701 is modified to Phosphoserine. Positions 716-736 (EAGGATSVQIEMNKKREAEFQ) are disordered. Residues 727–736 (MNKKREAEFQ) show a composition bias toward basic and acidic residues.

The protein belongs to the TRAFAC class myosin-kinesin ATPase superfamily. Myosin family. Muscle myosin is a hexameric protein that consists of 2 heavy chain subunits (MHC), 2 alkali light chain subunits (MLC) and 2 regulatory light chain subunits (MLC-2). Interacts with ECPAS. Interacts (via C-terminus) with LRRC39.

The protein resides in the cytoplasm. The protein localises to the myofibril. It is found in the sarcomere. Myosins are actin-based motor molecules with ATPase activity essential for muscle contraction. Forms regular bipolar thick filaments that, together with actin thin filaments, constitute the fundamental contractile unit of skeletal and cardiac muscle. The protein is Myosin-7 (MYH7) of Oryctolagus cuniculus (Rabbit).